The chain runs to 296 residues: Polyamine aminopropyltransferase (296 aa).

A PABS domain is found at 16 to 251 (HLWYFEYYTG…GMWSYTFASK (236 aa)). Glutamine 46 is an S-methyl-5'-thioadenosine binding site. Histidine 77 and aspartate 101 together coordinate spermidine. Residues glutamate 121 and 152 to 153 (NG) contribute to the S-methyl-5'-thioadenosine site. Aspartate 170 functions as the Proton acceptor in the catalytic mechanism. 170–173 (DSTD) lines the spermidine pocket.

It belongs to the spermidine/spermine synthase family. As to quaternary structure, homodimer or homotetramer.

It is found in the cytoplasm. The catalysed reaction is S-adenosyl 3-(methylsulfanyl)propylamine + putrescine = S-methyl-5'-thioadenosine + spermidine + H(+). It participates in amine and polyamine biosynthesis; spermidine biosynthesis; spermidine from putrescine: step 1/1. Its function is as follows. Catalyzes the irreversible transfer of a propylamine group from the amino donor S-adenosylmethioninamine (decarboxy-AdoMet) to putrescine (1,4-diaminobutane) to yield spermidine. The sequence is that of Polyamine aminopropyltransferase from Thermotoga neapolitana (strain ATCC 49049 / DSM 4359 / NBRC 107923 / NS-E).